A 183-amino-acid chain; its full sequence is Capsid protein (183 aa).

Residues 136–183 (NAPILSTLPETTVVRRRGRSPRRRTPSPRRRRSQSPRRRRSQSRESQC) are disordered. Over residues 149-176 (VRRRGRSPRRRTPSPRRRRSQSPRRRRS) the composition is skewed to basic residues. Phosphoserine; by host occurs at positions 155, 162, and 170. One copy of the 1; half-length repeat lies at 155-161 (SPRRRTP). The segment at 155 to 177 (SPRRRTPSPRRRRSQSPRRRRSQ) is 3 X 8 AA repeats of S-P-R-R-R-[PR]-S-Q. Positions 158-175 (RRTPSPRRRRSQSPRRRR) match the Bipartite nuclear localization signal motif. 2 consecutive repeat copies span residues 162-169 (SPRRRRSQ) and 170-177 (SPRRRRSQ). The RNA binding stretch occupies residues 177–183 (QSRESQC).

Belongs to the orthohepadnavirus core antigen family. Homodimerizes, then multimerizes. Interacts with cytosol exposed regions of viral L glycoprotein present in the reticulum-to-Golgi compartment. Interacts with human FLNB. Phosphorylated form interacts with host importin alpha; this interaction depends on the exposure of the NLS, which itself depends upon genome maturation and/or phosphorylation of the capsid protein. Interacts with host NUP153. Phosphorylated by host SRPK1, SRPK2, and maybe protein kinase C or GAPDH. Phosphorylation is critical for pregenomic RNA packaging. Protein kinase C phosphorylation is stimulated by HBx protein and may play a role in transport of the viral genome to the nucleus at the late step during the viral replication cycle.

It localises to the virion. The protein localises to the host cytoplasm. Functionally, self assembles to form an icosahedral capsid. Most capsids appear to be large particles with an icosahedral symmetry of T=4 and consist of 240 copies of capsid protein, though a fraction forms smaller T=3 particles consisting of 180 capsid proteins. Entering capsids are transported along microtubules to the nucleus. Phosphorylation of the capsid is thought to induce exposure of nuclear localization signal in the C-terminal portion of the capsid protein that allows binding to the nuclear pore complex via the importin (karyopherin-) alpha and beta. Capsids are imported in intact form through the nuclear pore into the nuclear basket, where it probably binds NUP153. Only capsids that contain the mature viral genome can release the viral DNA and capsid protein into the nucleoplasm. Immature capsids get stuck in the basket. Capsids encapsulate the pre-genomic RNA and the P protein. Pre-genomic RNA is reverse-transcribed into DNA while the capsid is still in the cytoplasm. The capsid can then either be directed to the nucleus, providing more genomes for transcription, or bud through the endoplasmic reticulum to provide new virions. In Hepatitis B virus genotype B2 (isolate Indonesia/pIDW420/1988) (HBV-B), this protein is Capsid protein.